The chain runs to 99 residues: Cytochrome c2 iso-1 (99 aa).

Heme c contacts are provided by Cys10, Cys13, His14, and Met75.

Belongs to the cytochrome c family. In terms of processing, binds 1 heme c group covalently per subunit.

Functionally, cytochrome c2 is found mainly in purple, non-sulfur, photosynthetic bacteria where it functions as the electron donor to the oxidized bacteriochlorophyll in the photophosphorylation pathway. However, it may also have a role in the respiratory chain and is found in some non-photosynthetic bacteria. This chain is Cytochrome c2 iso-1, found in Magnetospirillum fulvum (Rhodospirillum fulvum).